Here is a 414-residue protein sequence, read N- to C-terminus: Lysocardiolipin acyltransferase 1 (414 aa).

Helical transmembrane passes span phenylalanine 47–leucine 67 and alanine 86–isoleucine 106. The HXXXXD motif signature appears at histidine 123–aspartate 128. The residue at position 221 (lysine 221) is an N6-acetyllysine. Transmembrane regions (helical) follow at residues leucine 340–methionine 360 and leucine 362–valine 382.

It belongs to the 1-acyl-sn-glycerol-3-phosphate acyltransferase family. Expressed at higher level in heart, kidney and pancreas than in brain, spleen, liver, lung, small intestine and placenta.

Its subcellular location is the endoplasmic reticulum membrane. It catalyses the reaction a 1-acyl-sn-glycero-3-phosphate + an acyl-CoA = a 1,2-diacyl-sn-glycero-3-phosphate + CoA. The catalysed reaction is a 1-acyl-sn-glycero-3-phospho-(1D-myo-inositol) + an acyl-CoA = a 1,2-diacyl-sn-glycero-3-phospho-(1D-myo-inositol) + CoA. The enzyme catalyses 1-acyl-sn-glycero-3-phospho-(1'-sn-glycerol) + an acyl-CoA = a 1,2-diacyl-sn-glycero-3-phospho-(1'-sn-glycerol) + CoA. It carries out the reaction 1-hexadecanoyl-sn-glycero-3-phosphate + (9Z)-octadecenoyl-CoA = 1-hexadecanoyl-2-(9Z-octadecenoyl)-sn-glycero-3-phosphate + CoA. It catalyses the reaction 1-(9Z-octadecenoyl)-sn-glycero-3-phosphate + (9Z)-octadecenoyl-CoA = 1,2-di-(9Z-octadecenoyl)-sn-glycero-3-phosphate + CoA. The catalysed reaction is 1-(9Z,12Z)-octadecadienoyl-sn-glycero-3-phosphate + (9Z)-octadecenoyl-CoA = 1-(9Z,12Z)-octadecadienoyl-2-(9Z)-octadecenoyl-sn-glycero-3-phosphate + CoA. The enzyme catalyses 1-(9Z,12Z,15Z)-octadecatrienoyl-sn-glycero-3-phosphate + (9Z)-octadecenoyl-CoA = 1-(9Z,12Z,15Z)-octadecatrienoyl-2-(9Z)-octadecenoyl-sn-glycero-3-phosphate + CoA. It carries out the reaction 1-(9Z-octadecenoyl)-sn-glycero-3-phosphate + hexadecanoyl-CoA = 1-(9Z)-octadecenoyl-2-hexadecanoyl-sn-glycero-3-phosphate + CoA. It catalyses the reaction 1-(9Z-octadecenoyl)-sn-glycero-3-phosphate + octadecanoyl-CoA = 1-(9Z-octadecenoyl)-2-octadecanoyl-sn-glycero-3-phosphate + CoA. The catalysed reaction is 1-acyl-sn-glycero-3-phospho-(1'-sn-glycerol) + (9Z)-octadecenoyl-CoA = 1-acyl-2-(9Z-octadecenoyl)-sn-glycero-3-phospho-(1'-sn-glycerol) + CoA. The enzyme catalyses a 1-acyl-sn-glycero-3-phospho-(1D-myo-inositol) + (9Z)-octadecenoyl-CoA = a 1-acyl-2-(9Z-octadecenoyl)-sn-glycero-3-phospho-(1D-myo-inositol) + CoA. It carries out the reaction 1-hexadecanoyl-sn-glycero-3-phospho-(1D-myo-inositol) + hexadecanoyl-CoA = 1,2-dihexadecanoyl-sn-glycero-3-phospho-(1D-myo-inositol) + CoA. It catalyses the reaction 1-hexadecanoyl-sn-glycero-3-phospho-(1D-myo-inositol) + octadecanoyl-CoA = 1-hexadecanoyl-2-octadecanoyl-sn-glycero-3-phospho-(1D-myo-inositol) + CoA. The catalysed reaction is 1-hexadecanoyl-sn-glycero-3-phospho-(1D-myo-inositol) + (9Z)-octadecenoyl-CoA = 1-hexadecanoyl-2-(9Z-octadecenoyl)-sn-glycero-3-phospho-(1D-myo-inositol) + CoA. The enzyme catalyses 1-hexadecanoyl-sn-glycero-3-phospho-(1D-myo-inositol) + (9Z,12Z)-octadecadienoyl-CoA = 1-hexadecanoyl-2-(9Z,12Z-octadecadienoyl)-sn-glycero-3-phospho-(1D-myo-inositol) + CoA. It carries out the reaction 1-hexadecanoyl-sn-glycero-3-phospho-(1D-myo-inositol) + (5Z,8Z,11Z,14Z)-eicosatetraenoyl-CoA = 1-hexadecanoyl-2-(5Z,8Z,11Z,14Z-eicosatetraenoyl)-sn-glycero-3-phospho-D-myo-inositol + CoA. It catalyses the reaction 1-hexadecanoyl-sn-glycero-3-phospho-(1'-sn-glycerol) + hexadecanoyl-CoA = 1,2-dihexadecanoyl-sn-glycero-3-phospho-(1'-sn-glycerol) + CoA. The catalysed reaction is 1-hexadecanoyl-sn-glycero-3-phospho-(1'-sn-glycerol) + octadecanoyl-CoA = 1-hexadecanoyl-2-octadecanoyl-sn-glycero-3-phospho-(1'-sn-glycerol) + CoA. The enzyme catalyses 1-hexadecanoyl-sn-glycero-3-phospho-(1'-sn-glycerol) + (9Z)-octadecenoyl-CoA = 1-hexadecanoyl-2-(9Z-octadecenoyl)-sn-glycero-3-phospho-(1'-sn-glycerol) + CoA. It carries out the reaction 1-hexadecanoyl-sn-glycero-3-phospho-(1'-sn-glycerol) + (9Z,12Z)-octadecadienoyl-CoA = 1-hexadecanoyl-2-(9Z,12Z-octadecadienoyl)-sn-glycero-3-phospho-(1'-sn-glycerol) + CoA. It catalyses the reaction 1-tetradecanoyl-sn-glycero-3-phospho-(1'-sn-glycerol) + (9Z)-octadecenoyl-CoA = 1-tetradecanoyl-2-(9Z-octadecenoyl)-sn-glycero-3-phospho-(1'-sn-glycerol) + CoA. The catalysed reaction is 1-octadecanoyl-sn-glycero-3-phospho-(1'-sn-glycerol) + (9Z)-octadecenoyl-CoA = 1-octadecanoyl-2-(9Z-octadecenoyl)-sn-glycero-3-phospho-(1'-sn-glycerol) + CoA. The enzyme catalyses 1-(9Z-octadecenoyl)-sn-glycero-3-phospho-(1'-sn-glycerol) + (9Z)-octadecenoyl-CoA = 1,2-di-(9Z-octadecenoyl)-sn-glycero-3-phospho-(1'-sn-glycerol) + CoA. It carries out the reaction 1-hexadecanoyl-sn-glycero-3-phospho-(1D-myo-inositol) + dodecanoyl-CoA = 1-hexadecanoyl-2-dodecanoyl-sn-glycero-3-phospho-(1D-myo-inositol) + CoA. It catalyses the reaction 1',3'-bis-[1-acyl-sn-glycero-3-phospho]-glycerol + (9Z)-octadecenoyl-CoA = 1'-[1-acyl-2-(9Z)-octadecenoyl-sn-glycero-3-phospho],3'-[1-acyl,2-hydroxy-sn-glycero-3-phospho]-glycerol + CoA. The catalysed reaction is 1'-[1,2-diacyl-sn-glycero-3-phospho],3'-[1-acyl-sn-glycero-3-phospho]-glycerol + (9Z)-octadecenoyl-CoA = 1'-[1,2-diacyl-sn-glycero-3-phospho],3'-[1-acyl,2-(9Z)-octadecenoyl-sn-glycero-3-phospho]-glycerol + CoA. The enzyme catalyses 1'-[1,2-diacyl-sn-glycero-3-phospho],3'-[1-acyl-sn-glycero-3-phospho]-glycerol + (9Z,12Z)-octadecadienoyl-CoA = 1'-[1,2-diacyl-sn-glycero-3-phospho],3'-[1-acyl,2-(9Z,12Z)-octadecadienoyl-sn-glycero-3-phospho]-glycerol + CoA. It carries out the reaction 1'-[1,2-diacyl-sn-glycero-3-phospho],3'-[1-acyl-sn-glycero-3-phospho]-glycerol + dodecanoyl-CoA = 1'-[1,2-diacyl-sn-glycero-3-phospho],3'-[1-acyl,2-dodecanoyl-sn-glycero-3-phospho]-glycerol + CoA. It catalyses the reaction 1',3'-bis-[1-acyl-sn-glycero-3-phospho]-glycerol + dodecanoyl-CoA = 1'-[1-acyl-2-dodecanoyl-sn-glycero-3-phospho],3'-[1-acyl,2-hydroxy-sn-glycero-3-phospho]-glycerol + CoA. The catalysed reaction is a 1-acyl-sn-glycero-3-phosphate + (9Z)-octadecenoyl-CoA = a 1-acyl-2-(9Z-octadecenoyl)-sn-glycero-3-phosphate + CoA. The enzyme catalyses 1',3'-bis-[1-acyl-sn-glycero-3-phospho]-glycerol + (9Z,12Z)-octadecadienoyl-CoA = 1'-[1-acyl-2-(9Z,12Z)-octadecadienoyl-sn-glycero-3-phospho],3'-[1-acyl,2-hydroxy-sn-glycero-3-phospho]-glycerol + CoA. It carries out the reaction 1',3'-bis-[1-acyl-sn-glycero-3-phospho]-glycerol + hexadecanoyl-CoA = 1'-[1-acyl-2-hexadecanoyl-sn-glycero-3-phospho],3'-[1-acyl,2-hydroxy-sn-glycero-3-phospho]-glycerol + CoA. It catalyses the reaction 1',3'-bis-[1-acyl-sn-glycero-3-phospho]-glycerol + octadecanoyl-CoA = 1'-[1-acyl-2-octadecanoyl-sn-glycero-3-phospho],3'-[1-acyl,2-hydroxy-sn-glycero-3-phospho]-glycerol + CoA. The catalysed reaction is 1'-[1,2-diacyl-sn-glycero-3-phospho],3'-[1-acyl-sn-glycero-3-phospho]-glycerol + octanoyl-CoA = 1'-[1,2-diacyl-sn-glycero-3-phospho],3'-[1-acyl,2-octanoyl-sn-glycero-3-phospho]-glycerol + CoA. The enzyme catalyses 1',3'-bis-[1-acyl-sn-glycero-3-phospho]-glycerol + octanoyl-CoA = 1'-[1-acyl-2-octanoyl-sn-glycero-3-phospho],3'-[1-acyl,2-hydroxy-sn-glycero-3-phospho]-glycerol + CoA. It carries out the reaction 1'-[1,2-diacyl-sn-glycero-3-phospho],3'-[1-acyl-sn-glycero-3-phospho]-glycerol + hexadecanoyl-CoA = 1'-[1,2-diacyl-sn-glycero-3-phospho],3'-[1-acyl,2-hexadecanoyl-sn-glycero-3-phospho]-glycerol + CoA. It catalyses the reaction 1'-[1,2-diacyl-sn-glycero-3-phospho],3'-[1-acyl-sn-glycero-3-phospho]-glycerol + (5Z,8Z,11Z,14Z)-eicosatetraenoyl-CoA = 1'-[1,2-diacyl-sn-glycero-3-phospho],3'-[1-acyl,2-(5Z,8Z,11Z,14Z)-eicosatetraenoyl-sn-glycero-3-phospho]-glycerol + CoA. The catalysed reaction is 1',3'-bis-[1-acyl-sn-glycero-3-phospho]-glycerol + (5Z,8Z,11Z,14Z)-eicosatetraenoyl-CoA = 1'-[1-acyl-2-(5Z,8Z,11Z,14Z)-eicosatetraenoyl-sn-glycero-3-phospho],3'-[1-acyl,2-hydroxy-sn-glycero-3-phospho]-glycerol + CoA. The enzyme catalyses a 1-acyl-sn-glycero-3-phospho-(1D-myo-inositol) + octadecanoyl-CoA = a 1-acyl-2-octadecanoyl-sn-glycero-3-phospho-(1D-myo-inositol) + CoA. It carries out the reaction a 2-acyl-sn-glycero-3-phospho-D-myo-inositol + octadecanoyl-CoA = 1-octadecanoyl-2-acyl-sn-glycero-3-phospho-1D-myo-inositol + CoA. It functions in the pathway phospholipid metabolism; CDP-diacylglycerol biosynthesis; CDP-diacylglycerol from sn-glycerol 3-phosphate: step 2/3. Functionally, exhibits acyl-CoA:lysocardiolipin acyltransferase (ALCAT) activity; catalyzes the reacylation of lyso-cardiolipin to cardiolipin (CL), a key step in CL remodeling. Recognizes both monolysocardiolipin and dilysocardiolipin as substrates with a preference for linoleoyl-CoA and oleoyl-CoA as acyl donors. Also exhibits 1-acyl-sn-glycerol-3-phosphate acyltransferase activity (AGPAT) activity; converts 1-acyl-sn-glycerol-3- phosphate (lysophosphatidic acid or LPA) into 1,2-diacyl-sn-glycerol-3- phosphate (phosphatidic acid or PA) by incorporating an acyl moiety at the sn-2 position of the glycerol backbone. Possesses both lysophosphatidylinositol acyltransferase (LPIAT) and lysophosphatidylglycerol acyltransferase (LPGAT) activities. Required for establishment of the hematopoietic and endothelial lineages. The sequence is that of Lysocardiolipin acyltransferase 1 (LCLAT1) from Homo sapiens (Human).